Reading from the N-terminus, the 361-residue chain is UDP-3-O-acylglucosamine N-acyltransferase (361 aa).

The Proton acceptor role is filled by His264.

The protein belongs to the transferase hexapeptide repeat family. LpxD subfamily. In terms of assembly, homotrimer.

The enzyme catalyses a UDP-3-O-[(3R)-3-hydroxyacyl]-alpha-D-glucosamine + a (3R)-hydroxyacyl-[ACP] = a UDP-2-N,3-O-bis[(3R)-3-hydroxyacyl]-alpha-D-glucosamine + holo-[ACP] + H(+). It participates in bacterial outer membrane biogenesis; LPS lipid A biosynthesis. Its function is as follows. Catalyzes the N-acylation of UDP-3-O-acylglucosamine using 3-hydroxyacyl-ACP as the acyl donor. Is involved in the biosynthesis of lipid A, a phosphorylated glycolipid that anchors the lipopolysaccharide to the outer membrane of the cell. The protein is UDP-3-O-acylglucosamine N-acyltransferase of Bordetella avium (strain 197N).